The primary structure comprises 730 residues: Catalase-peroxidase 1 (730 aa).

The interval 1-24 is disordered; it reads MQEKGKCPVTGMTKHKTSGGTTNQ. A cross-link (tryptophyl-tyrosyl-methioninium (Trp-Tyr) (with M-244)) is located at residues 95-218; sequence WHSAGTYRMG…LAAVQMGLIY (124 aa). Histidine 96 (proton acceptor) is an active-site residue. Positions 218-244 form a cross-link, tryptophyl-tyrosyl-methioninium (Tyr-Met) (with W-95); the sequence is YVNPEGPNGQPSALASGKDIRDTFARM. Position 259 (histidine 259) interacts with heme b.

This sequence belongs to the peroxidase family. Peroxidase/catalase subfamily. Homodimer or homotetramer. It depends on heme b as a cofactor. In terms of processing, formation of the three residue Trp-Tyr-Met cross-link is important for the catalase, but not the peroxidase activity of the enzyme.

It carries out the reaction H2O2 + AH2 = A + 2 H2O. The enzyme catalyses 2 H2O2 = O2 + 2 H2O. Bifunctional enzyme with both catalase and broad-spectrum peroxidase activity. This Alkaliphilus metalliredigens (strain QYMF) protein is Catalase-peroxidase 1.